Here is a 905-residue protein sequence, read N- to C-terminus: Patched domain-containing protein 3 (905 aa).

The disordered stretch occupies residues 1–67; it reads MISSKVAPGE…PVGQEAPPPR (67 aa). A helical membrane pass occupies residues 94 to 114; sequence WLFLLGPVLLTASLGTGLIFL. 4 N-linked (GlcNAc...) asparagine glycosylation sites follow: N146, N199, N229, and N233. A run of 6 helical transmembrane segments spans residues 337-357, 369-389, 391-411, 441-461, 475-495, and 558-578; these read TVIPLFHLAYILIILFAVVSC, VAVFGVFSVAMSVVSGFGLML, IGVPFVIIVANSPFLILGVGV, VAVSITITTITNVLAFYTGIT, GTTLLFCYFYSITCFGAIMAL, and FIVVLIYIFYIISSIYGCFQV. In terms of domain architecture, SSD spans 338-495; the sequence is VIPLFHLAYI…ITCFGAIMAL (158 aa). Residues N647, N661, and N692 are each glycosylated (N-linked (GlcNAc...) asparagine). 5 helical membrane-spanning segments follow: residues 759–779, 781–801, 813–833, 849–869, and 882–902; these read VMIASTAMFIVSLLLIPHPVC, LWVTFAIASVIVGVTGFMAFW, LVICIGFSFDFSAHISYAFVS, LLGYPVLQSAISTIIGVCVLA, and IMFLVMFFGAAHGLIFIPVFL.

This sequence belongs to the patched family. In terms of tissue distribution, expressed in germ cells of the testis (at protein level).

Its subcellular location is the cell projection. It localises to the cilium. The protein resides in the flagellum membrane. It is found in the endoplasmic reticulum membrane. Functionally, may play a role in sperm development or sperm function. However, does not appear to have an essential role in spermatogenesis or male fertility. This is Patched domain-containing protein 3 from Rattus norvegicus (Rat).